Here is a 258-residue protein sequence, read N- to C-terminus: MRLTPLPAFDNNYIWTLIAPDGRAIIVDPGQALPILEAHSKGLIPTAILLTHHHADHIGGVPELLERWPTLPIYAPHDTRIALNYHRIGEGDSLNILGLRFQVIHTPGHTHSHLTFIGNDLLFCGDTLFSLGCGQIFEGTPTQMLASLQRLAALPIQTRVCCGHEYTLSNAAFALHVDPTNTALQKRRQQANAMRLANLPTLPISLESELNTNPFLRTAAPTIHAATATHLQRTPIDEVEVFATLRHWKNNFPIKNIP.

Residues His52, His54, Asp56, His57, His109, Asp126, and His164 each contribute to the Zn(2+) site.

It belongs to the metallo-beta-lactamase superfamily. Glyoxalase II family. As to quaternary structure, monomer. Zn(2+) serves as cofactor.

The enzyme catalyses an S-(2-hydroxyacyl)glutathione + H2O = a 2-hydroxy carboxylate + glutathione + H(+). It functions in the pathway secondary metabolite metabolism; methylglyoxal degradation; (R)-lactate from methylglyoxal: step 2/2. Its function is as follows. Thiolesterase that catalyzes the hydrolysis of S-D-lactoyl-glutathione to form glutathione and D-lactic acid. The polypeptide is Hydroxyacylglutathione hydrolase (Xylella fastidiosa (strain 9a5c)).